Reading from the N-terminus, the 466-residue chain is Ribulose bisphosphate carboxylase large chain (466 aa).

Position 5 is an N6,N6,N6-trimethyllysine (lysine 5). 2 residues coordinate substrate: asparagine 114 and threonine 164. The Proton acceptor role is filled by lysine 166. Lysine 168 is a binding site for substrate. Residues lysine 192, aspartate 194, and glutamate 195 each contribute to the Mg(2+) site. Lysine 192 is subject to N6-carboxylysine. The Proton acceptor role is filled by histidine 285. Substrate-binding residues include arginine 286, histidine 318, and serine 370.

The protein belongs to the RuBisCO large chain family. Type I subfamily. As to quaternary structure, heterohexadecamer of 8 large chains and 8 small chains; disulfide-linked. The disulfide link is formed within the large subunit homodimers. Requires Mg(2+) as cofactor. In terms of processing, the disulfide bond which can form in the large chain dimeric partners within the hexadecamer appears to be associated with oxidative stress and protein turnover.

Its subcellular location is the plastid. The protein resides in the chloroplast. The enzyme catalyses 2 (2R)-3-phosphoglycerate + 2 H(+) = D-ribulose 1,5-bisphosphate + CO2 + H2O. It carries out the reaction D-ribulose 1,5-bisphosphate + O2 = 2-phosphoglycolate + (2R)-3-phosphoglycerate + 2 H(+). Functionally, ruBisCO catalyzes two reactions: the carboxylation of D-ribulose 1,5-bisphosphate, the primary event in carbon dioxide fixation, as well as the oxidative fragmentation of the pentose substrate in the photorespiration process. Both reactions occur simultaneously and in competition at the same active site. The protein is Ribulose bisphosphate carboxylase large chain of Gonopterodendron arboreum (Maracaibo lignum-vitae).